We begin with the raw amino-acid sequence, 229 residues long: Small ribosomal subunit protein uS5 (229 aa).

Residues 61–124 (LEEQVLDVKL…AHAKLSLIKV (64 aa)) form the S5 DRBM domain.

This sequence belongs to the universal ribosomal protein uS5 family. Part of the 30S ribosomal subunit. Contacts protein S4.

Functionally, with S4 and S12 plays an important role in translational accuracy. This chain is Small ribosomal subunit protein uS5, found in Methanococcus maripaludis (strain C6 / ATCC BAA-1332).